The sequence spans 398 residues: Metallophosphoesterase 1 (398 aa).

Residues 25 to 45 (VCFVSSVLIFCEFFIYYLVIF) form a helical membrane-spanning segment. A divalent metal cation-binding residues include Asp-75, Asp-117, Asn-155, His-251, His-305, and His-307. A helical membrane pass occupies residues 359–379 (VFAIYWAAGALLVVLVLAHFQ). Residues 394–398 (KHKAA) carry the Di-lysine motif motif.

It belongs to the metallophosphoesterase superfamily. MPPE1 family. Mn(2+) serves as cofactor.

It localises to the endoplasmic reticulum-Golgi intermediate compartment membrane. Its function is as follows. Metallophosphoesterase that catalyzes the removal of a side-chain ethanolamine-phosphate (EtNP) from the second mannose of the GPI-anchor protein intermediate. Participates in the glycan remodeling steps of GPI-anchor maturation to allow an efficient transport of GPI-anchor proteins from the endoplasmic reticulum to the Golgi. The protein is Metallophosphoesterase 1 of Gallus gallus (Chicken).